Here is a 140-residue protein sequence, read N- to C-terminus: Putative pre-16S rRNA nuclease (140 aa).

Belongs to the YqgF nuclease family.

The protein resides in the cytoplasm. Functionally, could be a nuclease involved in processing of the 5'-end of pre-16S rRNA. In Halalkalibacterium halodurans (strain ATCC BAA-125 / DSM 18197 / FERM 7344 / JCM 9153 / C-125) (Bacillus halodurans), this protein is Putative pre-16S rRNA nuclease.